Consider the following 333-residue polypeptide: Ketol-acid reductoisomerase (NADP(+)) (333 aa).

The KARI N-terminal Rossmann domain occupies 2–182 (AELFYDDDAD…GGTRAGVIKT (181 aa)). NADP(+) is bound by residues 25–28 (YGSQ), Ser-51, Ser-53, and 83–86 (DPIQ). His-108 is a catalytic residue. Gly-134 lines the NADP(+) pocket. The 146-residue stretch at 183–328 (TFTEETETDL…RELRKLMSWV (146 aa)) folds into the KARI C-terminal knotted domain. 4 residues coordinate Mg(2+): Asp-191, Glu-195, Glu-227, and Glu-231. Residue Ser-252 coordinates substrate.

Belongs to the ketol-acid reductoisomerase family. Mg(2+) is required as a cofactor.

The catalysed reaction is (2R)-2,3-dihydroxy-3-methylbutanoate + NADP(+) = (2S)-2-acetolactate + NADPH + H(+). It carries out the reaction (2R,3R)-2,3-dihydroxy-3-methylpentanoate + NADP(+) = (S)-2-ethyl-2-hydroxy-3-oxobutanoate + NADPH + H(+). It participates in amino-acid biosynthesis; L-isoleucine biosynthesis; L-isoleucine from 2-oxobutanoate: step 2/4. The protein operates within amino-acid biosynthesis; L-valine biosynthesis; L-valine from pyruvate: step 2/4. In terms of biological role, involved in the biosynthesis of branched-chain amino acids (BCAA). Catalyzes an alkyl-migration followed by a ketol-acid reduction of (S)-2-acetolactate (S2AL) to yield (R)-2,3-dihydroxy-isovalerate. In the isomerase reaction, S2AL is rearranged via a Mg-dependent methyl migration to produce 3-hydroxy-3-methyl-2-ketobutyrate (HMKB). In the reductase reaction, this 2-ketoacid undergoes a metal-dependent reduction by NADPH to yield (R)-2,3-dihydroxy-isovalerate. This is Ketol-acid reductoisomerase (NADP(+)) from Streptomyces griseus subsp. griseus (strain JCM 4626 / CBS 651.72 / NBRC 13350 / KCC S-0626 / ISP 5235).